We begin with the raw amino-acid sequence, 162 residues long: uncharacterized protein (162 aa).

A signal peptide spans 1–18; the sequence is MRKTFLTLLCVSSAIAHA.

It belongs to the fimbrial protein family.

Functionally, part of the yfcOPQRSUV fimbrial operon. Could contribute to adhesion to various surfaces in specific environmental niches. Increases adhesion to eukaryotic T24 bladder epithelial cells in the absence of fim genes. This is an uncharacterized protein from Escherichia coli (strain K12).